The sequence spans 108 residues: Phosphocarrier protein HPr (108 aa).

The HPr domain occupies 21–108; sequence ELQATCIVKN…DAFSSGFGEL (88 aa). The active-site Pros-phosphohistidine intermediate is His-35.

The protein belongs to the HPr family.

The protein resides in the cytoplasm. Functionally, general (non sugar-specific) component of the phosphoenolpyruvate-dependent sugar phosphotransferase system (sugar PTS). This major carbohydrate active-transport system catalyzes the phosphorylation of incoming sugar substrates concomitantly with their translocation across the cell membrane. The phosphoryl group from phosphoenolpyruvate (PEP) is transferred to the phosphoryl carrier protein HPr by enzyme I. Phospho-HPr then transfers it to the PTS EIIA domain. This is Phosphocarrier protein HPr (ptsH) from Chlamydia pneumoniae (Chlamydophila pneumoniae).